The primary structure comprises 344 residues: Lipase chaperone (344 aa).

Residues 14 to 34 (AVVYGVVGLAAIAGVAMWSGA) traverse the membrane as a helical segment.

It belongs to the lipase chaperone family.

It is found in the cell inner membrane. May be involved in the folding of the extracellular lipase during its passage through the periplasm. The protein is Lipase chaperone (lifO) of Burkholderia cepacia (Pseudomonas cepacia).